Reading from the N-terminus, the 132-residue chain is Large ribosomal subunit protein bL19 (132 aa).

It belongs to the bacterial ribosomal protein bL19 family.

This protein is located at the 30S-50S ribosomal subunit interface and may play a role in the structure and function of the aminoacyl-tRNA binding site. The polypeptide is Large ribosomal subunit protein bL19 (Rhodospirillum centenum (strain ATCC 51521 / SW)).